We begin with the raw amino-acid sequence, 168 residues long: MALLKVLRFPDERLRTQATPITEFNAELQTQIDDMFETMYQEKGIGLAATQVDYHKQLIVMDLQDEVERPKVFINPEIIASSGDFCNEEGCLSVPGIYAKVDRAEFVTVKALDRHGNEFTVEADDLFAICIQHEMDHLKGKLFVDYLSPLKRQRIKQKLEKAAKQDAK.

Residues Cys-91 and His-133 each coordinate Fe cation. Glu-134 is a catalytic residue. Residue His-137 participates in Fe cation binding.

Belongs to the polypeptide deformylase family. Requires Fe(2+) as cofactor.

It carries out the reaction N-terminal N-formyl-L-methionyl-[peptide] + H2O = N-terminal L-methionyl-[peptide] + formate. Removes the formyl group from the N-terminal Met of newly synthesized proteins. Requires at least a dipeptide for an efficient rate of reaction. N-terminal L-methionine is a prerequisite for activity but the enzyme has broad specificity at other positions. In Shewanella oneidensis (strain ATCC 700550 / JCM 31522 / CIP 106686 / LMG 19005 / NCIMB 14063 / MR-1), this protein is Peptide deformylase 1.